The chain runs to 444 residues: Ribulose bisphosphate carboxylase (444 aa).

Catalysis depends on Lys163, which acts as the Proton acceptor. Lys165 contributes to the substrate binding site. 3 residues coordinate Mg(2+): Lys189, Asp191, and Glu192. Residue Lys189 is modified to N6-carboxylysine. Catalysis depends on His281, which acts as the Proton acceptor. Substrate contacts are provided by residues Arg282, His314, 367 to 369 (SGG), and 389 to 392 (QLGG).

Belongs to the RuBisCO large chain family. Type III subfamily. As to quaternary structure, homodimer or homodecamer. In contrast to form I RuBisCO, the form III RuBisCO is composed solely of large subunits. Mg(2+) serves as cofactor.

The enzyme catalyses 2 (2R)-3-phosphoglycerate + 2 H(+) = D-ribulose 1,5-bisphosphate + CO2 + H2O. The catalysed reaction is D-ribulose 1,5-bisphosphate + O2 = 2-phosphoglycolate + (2R)-3-phosphoglycerate + 2 H(+). Catalyzes the addition of molecular CO(2) and H(2)O to ribulose 1,5-bisphosphate (RuBP), generating two molecules of 3-phosphoglycerate (3-PGA). Functions in an archaeal AMP degradation pathway, together with AMP phosphorylase and R15P isomerase. This Thermococcus onnurineus (strain NA1) protein is Ribulose bisphosphate carboxylase.